The chain runs to 228 residues: Translin (228 aa).

The segment at 86–90 is DNA/RNA binding; that stretch reads RFHEH. The interval 177–198 is leucine-zipper; that stretch reads LDSGFRLLNLKNDSLRKRYDGL. Lysine 187 is subject to N6-acetyllysine. The residue at position 190 (serine 190) is a Phosphoserine. The residue at position 199 (lysine 199) is an N6-acetyllysine.

Belongs to the translin family. In terms of assembly, ring-shaped heterooctamer of six TSN and two TSNAX subunits, DNA/RNA binding occurs inside the ring.

It localises to the cytoplasm. The protein localises to the nucleus. In terms of biological role, DNA-binding protein that specifically recognizes consensus sequences at the breakpoint junctions in chromosomal translocations, mostly involving immunoglobulin (Ig)/T-cell receptor gene segments. Seems to recognize single-stranded DNA ends generated by staggered breaks occurring at recombination hot spots. Functionally, exhibits both single-stranded and double-stranded endoribonuclease activity. May act as an activator of RNA-induced silencing complex (RISC) by facilitating endonucleolytic cleavage of the siRNA passenger strand. The sequence is that of Translin from Homo sapiens (Human).